The chain runs to 141 residues: Large ribosomal subunit protein uL11 (141 aa).

This sequence belongs to the universal ribosomal protein uL11 family. Part of the ribosomal stalk of the 50S ribosomal subunit. Interacts with L10 and the large rRNA to form the base of the stalk. L10 forms an elongated spine to which L12 dimers bind in a sequential fashion forming a multimeric L10(L12)X complex. Post-translationally, one or more lysine residues are methylated.

Forms part of the ribosomal stalk which helps the ribosome interact with GTP-bound translation factors. This Chlamydia trachomatis serovar A (strain ATCC VR-571B / DSM 19440 / HAR-13) protein is Large ribosomal subunit protein uL11.